Here is a 124-residue protein sequence, read N- to C-terminus: Conotoxin Im14.2 (124 aa).

An N-terminal signal peptide occupies residues 1 to 20 (MARFLSILLCFAMATGLAAG). The propeptide occupies 21-99 (IRYPDRVLGR…AENPVRDPKK (79 aa)).

In terms of processing, contain 2 disulfide bonds. In terms of tissue distribution, expressed by the venom duct.

The protein localises to the secreted. Functionally, probable neurotoxin. This chain is Conotoxin Im14.2, found in Conus imperialis (Imperial cone).